We begin with the raw amino-acid sequence, 185 residues long: Signal peptidase I (185 aa).

Topologically, residues 1-20 (MKSEKEKTSKKSAVLDWAKA) are cytoplasmic. A helical membrane pass occupies residues 21–41 (IIIAVVLAVLIRNFLFAPYVV). The Extracellular portion of the chain corresponds to 42–185 (DGESMEPTLH…FPFNEIRKTK (144 aa)). Active-site residues include Ser45 and Lys85.

The protein belongs to the peptidase S26 family.

Its subcellular location is the cell membrane. It carries out the reaction Cleavage of hydrophobic, N-terminal signal or leader sequences from secreted and periplasmic proteins.. This chain is Signal peptidase I (sipA), found in Bacillus amyloliquefaciens (Bacillus velezensis).